A 239-amino-acid polypeptide reads, in one-letter code: MRIERVDDTTVKLFITYSDIEARGFSREDLWTNRKRGEEFFWSMMDEINEEEDFVVEGPLWIQVHAFEKGVEVTISKSKNEDMMNMSDDDATDQFDEQVQELLAQTLEGEDQLEELFEQRTKEKEAQGSKRQKSSARKNTRTIVVKFNDLEDVINYAYHSNPITTEFEDLLYMVDGTYYYAVHFDSHVDQEVINDSYSQLLEFAYPTDRTEVYLNDYAKIIMSHNVTAQVRRYFPETTE.

Positions 118-128 (EQRTKEKEAQG) are enriched in basic and acidic residues. The interval 118–137 (EQRTKEKEAQGSKRQKSSAR) is disordered.

This sequence belongs to the MecA family. In terms of assembly, homodimer.

Its function is as follows. Enables the recognition and targeting of unfolded and aggregated proteins to the ClpC protease or to other proteins involved in proteolysis. The sequence is that of Adapter protein MecA from Staphylococcus aureus (strain JH1).